Here is a 400-residue protein sequence, read N- to C-terminus: Phosphoglycerate kinase (400 aa).

Residues 19–21, Arg-38, 61–64, Arg-124, and Arg-161 contribute to the substrate site; these read DLN and HLGR. Residues Lys-211, Gly-299, Glu-330, and 356–359 contribute to the ATP site; that span reads GGDS.

This sequence belongs to the phosphoglycerate kinase family. As to quaternary structure, monomer.

It is found in the cytoplasm. The catalysed reaction is (2R)-3-phosphoglycerate + ATP = (2R)-3-phospho-glyceroyl phosphate + ADP. It participates in carbohydrate degradation; glycolysis; pyruvate from D-glyceraldehyde 3-phosphate: step 2/5. The sequence is that of Phosphoglycerate kinase from Parafrankia sp. (strain EAN1pec).